The sequence spans 74 residues: DNA-directed RNA polymerase subunit omega (74 aa).

Belongs to the RNA polymerase subunit omega family. In terms of assembly, the RNAP catalytic core consists of 2 alpha, 1 beta, 1 beta' and 1 omega subunit. When a sigma factor is associated with the core the holoenzyme is formed, which can initiate transcription.

The enzyme catalyses RNA(n) + a ribonucleoside 5'-triphosphate = RNA(n+1) + diphosphate. Its function is as follows. Promotes RNA polymerase assembly. Latches the N- and C-terminal regions of the beta' subunit thereby facilitating its interaction with the beta and alpha subunits. This chain is DNA-directed RNA polymerase subunit omega, found in Helicobacter pylori (strain Shi470).